Consider the following 659-residue polypeptide: Probable acyl-coenzyme A oxidase acox-1.5 (659 aa).

FAD-binding positions include 148 to 151, 156 to 157, and Gly190; these read YAQT and GT. Residues 284–287 and Arg294 contribute to the substrate site; that span reads KVGY. Residues Arg319 and 339 to 342 each bind FAD; that span reads QQYR. Residues His395 and Gln403 each coordinate ATP. Residue Gly410 participates in FAD binding. 432 to 433 lines the substrate pocket; it reads YE. The active-site Proton acceptor is the Glu433. FAD is bound at residue Glu435. 524 to 527 contacts ATP; sequence KAAR. Positions 657–659 match the Microbody targeting signal motif; that stretch reads SKL.

The protein belongs to the acyl-CoA oxidase family. Homodimer. The cofactor is FAD.

Its subcellular location is the peroxisome. Its pathway is lipid metabolism; peroxisomal fatty acid beta-oxidation. With respect to regulation, activated by ATP. ATP binding leads to a conformational change that promotes FAD cofactor binding and enzyme activity. ATP binding likely occurs during acox-1.5 folding and/or dimer formation. In terms of biological role, involved in the first step of peroxisomal beta-oxidation by catalyzing the desaturation of fatty acid-derived side chains. This Caenorhabditis elegans protein is Probable acyl-coenzyme A oxidase acox-1.5.